The primary structure comprises 498 residues: Trehalose-6-phosphate synthase (498 aa).

R28 provides a ligand contact to D-glucose 6-phosphate. Position 48 to 49 (48 to 49) interacts with UDP-alpha-D-glucose; the sequence is GG. The D-glucose 6-phosphate site is built by Y106 and D160. UDP-alpha-D-glucose-binding residues include R302 and K307. R340 contributes to the D-glucose 6-phosphate binding site. Residue 405–409 participates in UDP-alpha-D-glucose binding; sequence LVAKE.

Belongs to the glycosyltransferase 20 family. In terms of assembly, homotetramer.

The catalysed reaction is ADP-alpha-D-glucose + D-glucose 6-phosphate = alpha,alpha-trehalose 6-phosphate + ADP + H(+). It carries out the reaction CDP-alpha-D-glucose + D-glucose 6-phosphate = alpha,alpha-trehalose 6-phosphate + CDP + H(+). The enzyme catalyses GDP-alpha-D-glucose + D-glucose 6-phosphate = alpha,alpha-trehalose 6-phosphate + GDP + H(+). It catalyses the reaction TDP-alpha-D-glucose + D-glucose 6-phosphate = 5-methyl-UDP + alpha,alpha-trehalose 6-phosphate + H(+). The catalysed reaction is D-glucose 6-phosphate + UDP-alpha-D-glucose = alpha,alpha-trehalose 6-phosphate + UDP + H(+). It participates in glycan biosynthesis; trehalose biosynthesis. In terms of biological role, probably involved in the osmoprotection via the biosynthesis of trehalose and in the production of glycogen and alpha-glucan via the TreS-Pep2 branch involved in the biosynthesis of maltose-1-phosphate (M1P). Catalyzes the transfer of glucose from UDP-glucose (UDP-Glc) to D-glucose 6-phosphate (Glc-6-P) to form trehalose-6-phosphate. Probably also able to use ADP-Glc, CDP-Glc, GDP-Glc and TDP-Glc as glucosyl donors. In Mycobacterium leprae (strain TN), this protein is Trehalose-6-phosphate synthase.